Here is a 128-residue protein sequence, read N- to C-terminus: Small ribosomal subunit protein eS8 (128 aa).

Belongs to the eukaryotic ribosomal protein eS8 family. In terms of assembly, part of the 30S ribosomal subunit.

The sequence is that of Small ribosomal subunit protein eS8 from Methanococcus maripaludis (strain C5 / ATCC BAA-1333).